A 300-amino-acid chain; its full sequence is uncharacterized protein (300 aa).

Residues leucine 230–arginine 251 form a disordered region. A compositionally biased stretch (low complexity) spans arginine 231 to arginine 251.

This is an uncharacterized protein from Acanthamoeba polyphaga (Amoeba).